The chain runs to 78 residues: MYFVADVKEKECAQYNCKQCVLFCPEPNCLNFKASTNSAWVWYDRCKGCEICVYVCSDLLKRHCIEMVMVTPKATAKS.

2 4Fe-4S ferredoxin-type domains span residues F3–S35 and N37–E66. 8 residues coordinate [4Fe-4S] cluster: C12, C17, C20, C24, C46, C49, C52, and C56.

In terms of assembly, heterotetramer of one alpha, one beta, one delta and one gamma chain. Requires [4Fe-4S] cluster as cofactor.

The sequence is that of Ferredoxin oxidoreductase 2 subunit ForD (forD2) from Aquifex aeolicus (strain VF5).